Consider the following 228-residue polypeptide: Phosphoribosylformylglycinamidine synthase subunit PurQ (228 aa).

The Glutamine amidotransferase type-1 domain maps to 3–226 (FAVIVFPGSN…IANWRDSYAI (224 aa)). Cys-87 (nucleophile) is an active-site residue. Catalysis depends on residues His-195 and Glu-197.

In terms of assembly, part of the FGAM synthase complex composed of 1 PurL, 1 PurQ and 2 PurS subunits.

The protein resides in the cytoplasm. The enzyme catalyses N(2)-formyl-N(1)-(5-phospho-beta-D-ribosyl)glycinamide + L-glutamine + ATP + H2O = 2-formamido-N(1)-(5-O-phospho-beta-D-ribosyl)acetamidine + L-glutamate + ADP + phosphate + H(+). It carries out the reaction L-glutamine + H2O = L-glutamate + NH4(+). It participates in purine metabolism; IMP biosynthesis via de novo pathway; 5-amino-1-(5-phospho-D-ribosyl)imidazole from N(2)-formyl-N(1)-(5-phospho-D-ribosyl)glycinamide: step 1/2. Part of the phosphoribosylformylglycinamidine synthase complex involved in the purines biosynthetic pathway. Catalyzes the ATP-dependent conversion of formylglycinamide ribonucleotide (FGAR) and glutamine to yield formylglycinamidine ribonucleotide (FGAM) and glutamate. The FGAM synthase complex is composed of three subunits. PurQ produces an ammonia molecule by converting glutamine to glutamate. PurL transfers the ammonia molecule to FGAR to form FGAM in an ATP-dependent manner. PurS interacts with PurQ and PurL and is thought to assist in the transfer of the ammonia molecule from PurQ to PurL. This Oceanobacillus iheyensis (strain DSM 14371 / CIP 107618 / JCM 11309 / KCTC 3954 / HTE831) protein is Phosphoribosylformylglycinamidine synthase subunit PurQ.